A 226-amino-acid chain; its full sequence is Biosynthetic peptidoglycan transglycosylase (226 aa).

The helical transmembrane segment at 8-28 (FFGWTWFVMWRFLLLLALLLL) threads the bilayer.

It belongs to the glycosyltransferase 51 family.

The protein resides in the cell inner membrane. It catalyses the reaction [GlcNAc-(1-&gt;4)-Mur2Ac(oyl-L-Ala-gamma-D-Glu-L-Lys-D-Ala-D-Ala)](n)-di-trans,octa-cis-undecaprenyl diphosphate + beta-D-GlcNAc-(1-&gt;4)-Mur2Ac(oyl-L-Ala-gamma-D-Glu-L-Lys-D-Ala-D-Ala)-di-trans,octa-cis-undecaprenyl diphosphate = [GlcNAc-(1-&gt;4)-Mur2Ac(oyl-L-Ala-gamma-D-Glu-L-Lys-D-Ala-D-Ala)](n+1)-di-trans,octa-cis-undecaprenyl diphosphate + di-trans,octa-cis-undecaprenyl diphosphate + H(+). The protein operates within cell wall biogenesis; peptidoglycan biosynthesis. In terms of biological role, peptidoglycan polymerase that catalyzes glycan chain elongation from lipid-linked precursors. This Shewanella frigidimarina (strain NCIMB 400) protein is Biosynthetic peptidoglycan transglycosylase.